The chain runs to 538 residues: Putative outer membrane porin BglH (538 aa).

Residues 1–25 form the signal peptide; the sequence is MFRRNLITSAILLMAPLAFSAQSLA. The interval 52-82 is disordered; sequence KDEEKKKYTPATVNRSVSTNDQGYAANPFPT. Residues 62–73 show a composition bias toward polar residues; it reads ATVNRSVSTNDQ.

The protein belongs to the porin LamB (TC 1.B.3) family.

It localises to the cell outer membrane. May be a sugar porin with a broad carbohydrate specificity. The sequence is that of Putative outer membrane porin BglH (bglH) from Shigella sonnei (strain Ss046).